A 172-amino-acid chain; its full sequence is Protein-export protein SecB (172 aa).

The tract at residues 153–172 (AQGQGGDSGIVMPDGSQARH) is disordered.

The protein belongs to the SecB family. As to quaternary structure, homotetramer, a dimer of dimers. One homotetramer interacts with 1 SecA dimer.

The protein localises to the cytoplasm. Its function is as follows. One of the proteins required for the normal export of preproteins out of the cell cytoplasm. It is a molecular chaperone that binds to a subset of precursor proteins, maintaining them in a translocation-competent state. It also specifically binds to its receptor SecA. The polypeptide is Protein-export protein SecB (Cupriavidus metallidurans (strain ATCC 43123 / DSM 2839 / NBRC 102507 / CH34) (Ralstonia metallidurans)).